The following is a 947-amino-acid chain: Protein NLP8 (947 aa).

Disordered stretches follow at residues 114–135 (RSSA…ELSG), 509–533 (STKK…TTSS), and 550–591 (SMFS…EKNV). The span at 126–135 (RSSDSDELSG) shows a compositional bias: basic and acidic residues. Polar residues-rich tracts occupy residues 522 to 533 (SDMSNFPQTTSS) and 550 to 572 (SMFS…TLEQ). Residues 573–587 (DVSKARTPEKKKSTT) are compositionally biased toward basic and acidic residues. An RWP-RK domain is found at 577 to 671 (ARTPEKKKST…LDSVQGVEGG (95 aa)). Positions 646–666 (RKINKVNRSLRKIQTVLDSVQ) form a coiled coil. Residues 805-815 (SCSISDSSNGS) show a composition bias toward low complexity. The tract at residues 805-828 (SCSISDSSNGSGAVLRGSSSTSME) is disordered. Residues 847 to 929 (TLIVKASYRE…HSVKFLVRDL (83 aa)) form the PB1 domain.

Its subcellular location is the nucleus. Probable transcription factor. This Arabidopsis thaliana (Mouse-ear cress) protein is Protein NLP8 (NLP8).